A 210-amino-acid chain; its full sequence is MSTLHKVKAYFGMAPMEDYDDEYYDDRSPTHGYGRSRFEEGYGRYEGRDYSDLRGDPTGYLPLGYRGGYGDEHRFRPREFDRPDLSRPRLGSWLRNSTRGALAMDPRRMAMLFDEGSPLSKITTLRPKDYSEARTIGERFRDGTPVIIDLVSMDNADAKRLVDFAAGLAFALRGSFDKVATKVFLLSPADVDVSPEERRRIAETGFYAYQ.

Belongs to the SepF family. In terms of assembly, homodimer. Interacts with FtsZ.

The protein resides in the cytoplasm. Its function is as follows. Cell division protein that is part of the divisome complex and is recruited early to the Z-ring. Probably stimulates Z-ring formation, perhaps through the cross-linking of FtsZ protofilaments. Its function overlaps with FtsA. The sequence is that of Cell division protein SepF from Mycobacterium leprae (strain Br4923).